The sequence spans 310 residues: Mitogen-activated protein kinase kinase 9 (310 aa).

A Protein kinase domain is found at 47–306 (LEKLNVLGCG…APQLLAHPFL (260 aa)). ATP-binding positions include 53–61 (LGCGNGGIV) and lysine 76. The active-site Proton acceptor is aspartate 167. A phosphoserine mark is found at serine 195 and serine 201. At threonine 205 the chain carries Phosphothreonine.

It belongs to the protein kinase superfamily. STE Ser/Thr protein kinase family. MAP kinase kinase subfamily. Phosphorylation at Ser-195 and Ser-201 by MAP kinase kinase kinases positively regulates kinase activity. Autophosphorylated.

The protein resides in the cytoplasm. Its subcellular location is the nucleus. It catalyses the reaction L-seryl-[protein] + ATP = O-phospho-L-seryl-[protein] + ADP + H(+). The enzyme catalyses L-threonyl-[protein] + ATP = O-phospho-L-threonyl-[protein] + ADP + H(+). The catalysed reaction is L-tyrosyl-[protein] + ATP = O-phospho-L-tyrosyl-[protein] + ADP + H(+). Its function is as follows. MKK9-MPK3/MPK6 module phosphorylates and activates EIN3, leading to the promotion of EIN3-mediated transcription in ethylene signaling. Autophosphorylates and also phosphorylates MPK3 and MPK6. Plays an important role in ethylene and camalexin biosynthesis and in salt stress response. MKK9-MPK6 module positively regulates leaf senescence. This is Mitogen-activated protein kinase kinase 9 (MKK9) from Arabidopsis thaliana (Mouse-ear cress).